Reading from the N-terminus, the 274-residue chain is 2,3,4,5-tetrahydropyridine-2,6-dicarboxylate N-succinyltransferase (274 aa).

2 residues coordinate substrate: R104 and D141.

The protein belongs to the transferase hexapeptide repeat family. Homotrimer.

It localises to the cytoplasm. It carries out the reaction (S)-2,3,4,5-tetrahydrodipicolinate + succinyl-CoA + H2O = (S)-2-succinylamino-6-oxoheptanedioate + CoA. It functions in the pathway amino-acid biosynthesis; L-lysine biosynthesis via DAP pathway; LL-2,6-diaminopimelate from (S)-tetrahydrodipicolinate (succinylase route): step 1/3. The protein is 2,3,4,5-tetrahydropyridine-2,6-dicarboxylate N-succinyltransferase of Buchnera aphidicola subsp. Baizongia pistaciae (strain Bp).